The sequence spans 320 residues: Replication factor C small subunit 2 (320 aa).

Residue 44-51 (GPPGTGKT) coordinates ATP.

Belongs to the activator 1 small subunits family. RfcS subfamily. Heteromultimer composed of small subunits (RfcS) and large subunits (RfcL).

In terms of biological role, part of the RFC clamp loader complex which loads the PCNA sliding clamp onto DNA. The polypeptide is Replication factor C small subunit 2 (Pyrobaculum islandicum (strain DSM 4184 / JCM 9189 / GEO3)).